A 1013-amino-acid chain; its full sequence is AP-2 complex subunit alpha-2 (1013 aa).

4 HEAT repeats span residues 254–289 (AMRA…VVKN), 354–391 (DIIK…VSNA), 393–430 (DIVE…DLSW), and 521–565 (TVST…CIDV). The interval 652–676 (STDPESVARSLSHPNGTLSNIDPQT) is disordered. Residues 663 to 675 (SHPNGTLSNIDPQ) show a composition bias toward polar residues. Residues 742-841 (ALCLKDSGVL…LDFSYKFGTN (100 aa)) form the GAE domain. The required for AP180 binding stretch occupies residues 760–1013 (GIKAEWRGHH…DPGAMLAGLL (254 aa)).

It belongs to the adaptor complexes large subunit family. In terms of assembly, adaptor protein complex 2 (AP-2) is a heterotetramer composed of two large adaptins (alpha-type and beta-type subunits), a medium adaptin (mu-type subunit) and a small adaptin (sigma-type subunit). Interacts with AP180.

Its subcellular location is the membrane. The protein localises to the coated pit. Subunit of the adaptor protein complex 2 (AP-2). Adaptor protein complexes function in protein transport via transport vesicles in different membrane traffic pathways. Adaptor protein complexes are vesicle coat components and appear to be involved in cargo selection and vesicle formation. AP-2 is involved in clathrin-dependent endocytosis in which cargo proteins are incorporated into vesicles surrounded by clathrin (clathrin-coated vesicles, CCVs) which are destined for fusion with the early endosome. The complex binds polyphosphoinositides. This is AP-2 complex subunit alpha-2 (ALPHAC-AD) from Arabidopsis thaliana (Mouse-ear cress).